The following is a 152-amino-acid chain: Superoxide dismutase [Cu-Zn] (152 aa).

Positions 45, 47, and 62 each coordinate Cu cation. Cys56 and Cys145 form a disulfide bridge. Zn(2+) is bound by residues His62, His70, His79, and Asp82. A Cu cation-binding site is contributed by His119.

It belongs to the Cu-Zn superoxide dismutase family. As to quaternary structure, homodimer. Requires Cu cation as cofactor. It depends on Zn(2+) as a cofactor.

Its subcellular location is the cytoplasm. The enzyme catalyses 2 superoxide + 2 H(+) = H2O2 + O2. Its function is as follows. Destroys radicals which are normally produced within the cells and which are toxic to biological systems. The sequence is that of Superoxide dismutase [Cu-Zn] (SODCC) from Nicotiana plumbaginifolia (Leadwort-leaved tobacco).